Consider the following 242-residue polypeptide: 1-(5-phosphoribosyl)-5-[(5-phosphoribosylamino)methylideneamino] imidazole-4-carboxamide isomerase (242 aa).

The Proton acceptor role is filled by Asp8. Asp129 acts as the Proton donor in catalysis.

This sequence belongs to the HisA/HisF family.

It is found in the cytoplasm. The catalysed reaction is 1-(5-phospho-beta-D-ribosyl)-5-[(5-phospho-beta-D-ribosylamino)methylideneamino]imidazole-4-carboxamide = 5-[(5-phospho-1-deoxy-D-ribulos-1-ylimino)methylamino]-1-(5-phospho-beta-D-ribosyl)imidazole-4-carboxamide. Its pathway is amino-acid biosynthesis; L-histidine biosynthesis; L-histidine from 5-phospho-alpha-D-ribose 1-diphosphate: step 4/9. The sequence is that of 1-(5-phosphoribosyl)-5-[(5-phosphoribosylamino)methylideneamino] imidazole-4-carboxamide isomerase from Syntrophus aciditrophicus (strain SB).